A 196-amino-acid polypeptide reads, in one-letter code: MSHSTDLSALARWMAADFSNQAQAFENPPFYAHIRVAIRPLDQAKFGDRLLFLEQAYDFMLQRPYRLRVLKLKVVEDHIEIENFKVKDEEKFYGAARDLGKLAQLTPADLEPMHGCDMIVEWTGTSFKGEVQPGRQCRVMRDGKETYLENSFEVSETGLISLDRGYDPETNERVWGSVAGAFHFVRWQSFADEVSF.

It belongs to the CpcT/CpeT biliprotein lyase family.

Functionally, covalently attaches a chromophore to Cys residue(s) of phycobiliproteins. The protein is Chromophore lyase CpcT/CpeT of Synechocystis sp. (strain ATCC 27184 / PCC 6803 / Kazusa).